We begin with the raw amino-acid sequence, 517 residues long: MSSLTNPTTVMEEEEVPVAAPIRRGNKNPRRYSLVHQASCETQHHIGIRRQNTIQHRKQLTDQMREQKILQQLNDEGVEVIFAANDVSSIDFSVIVTSTDYISTFVSDILYNMKSAGVQICHVETRESKAVSGHDVLLDCRATKNQLIKAAELLTQNHVALTHFSIFSKKSVEKSQSMIWFPRHISELDQCSKCITKYEPTTDPRHPGHGDDEYIARRKFLNDQALEFKFGDEIGYVEYTEDEHATWKAVYEKLGGLHESHTCSVYRQNLKILQKEKVLTADRIPQIRDVNKFLQKKTGFELRPCSGLLSARDFLASLAFRVFQTTTYLRHHKSPHHSPEPDLIHELLGHVPMFSDPLLAQMSQDIGLMSLGASDEHIEKLATVYWFIVEFGLCKEDGKLKAIGAGLLSAYGELIHACSDAPEHKDFDPAVTAIQKYEDDDYQPLYFVADSIHDALAKLRKYASSMDRPFSVVYDPFTKSIETIQSSADLEKAFSRLSNDLSAITHAADRMKISITA.

Ser33 is modified (phosphoserine; by PKA). Fe cation is bound by residues His345, His350, and Glu390.

This sequence belongs to the biopterin-dependent aromatic amino acid hydroxylase family. The cofactor is Fe(2+).

The protein resides in the cytoplasm. Its subcellular location is the perinuclear region. It localises to the cell projection. The protein localises to the axon. It catalyses the reaction (6R)-L-erythro-5,6,7,8-tetrahydrobiopterin + L-tyrosine + O2 = (4aS,6R)-4a-hydroxy-L-erythro-5,6,7,8-tetrahydrobiopterin + L-dopa. The protein operates within catecholamine biosynthesis; dopamine biosynthesis; dopamine from L-tyrosine: step 1/2. Phosphorylation leads to an increase in the catalytic activity. Its function is as follows. Involved in the synthesis of catecholamines, such as dopamine. Has a role in serotonin signaling. Required for normal explorative and foraging behavior. The polypeptide is Tyrosine 3-monooxygenase (cat-2) (Caenorhabditis briggsae).